We begin with the raw amino-acid sequence, 224 residues long: Probable GTP-binding protein EngB (224 aa).

The EngB-type G domain maps to 27–201; that stretch reads SGIEVAFAGR…DAIICQWLEQ (175 aa). Residues 35–42, 62–66, 80–83, 147–150, and 180–182 contribute to the GTP site; these read GRSNAGKS, GRTQL, DLPG, TKCD, and FSS. The Mg(2+) site is built by S42 and T64. A disordered region spans residues 205-224; that stretch reads EYELPEEDDFDDSDEFTEEE.

The protein belongs to the TRAFAC class TrmE-Era-EngA-EngB-Septin-like GTPase superfamily. EngB GTPase family. The cofactor is Mg(2+).

Its function is as follows. Necessary for normal cell division and for the maintenance of normal septation. The polypeptide is Probable GTP-binding protein EngB (Colwellia psychrerythraea (strain 34H / ATCC BAA-681) (Vibrio psychroerythus)).